Here is a 141-residue protein sequence, read N- to C-terminus: Putative pre-16S rRNA nuclease (141 aa).

Belongs to the YqgF nuclease family.

It is found in the cytoplasm. Could be a nuclease involved in processing of the 5'-end of pre-16S rRNA. The chain is Putative pre-16S rRNA nuclease from Coxiella burnetii (strain CbuG_Q212) (Coxiella burnetii (strain Q212)).